We begin with the raw amino-acid sequence, 163 residues long: Nucleotide-binding protein PC1_1036 (163 aa).

The protein belongs to the YajQ family.

Functionally, nucleotide-binding protein. In Pectobacterium carotovorum subsp. carotovorum (strain PC1), this protein is Nucleotide-binding protein PC1_1036.